The following is a 681-amino-acid chain: Chaperone protein htpG (681 aa).

The a; substrate-binding stretch occupies residues 1 to 326 (MQKGNIGVTT…SPDIPLNVSR (326 aa)). The tract at residues 327–545 (SYLQSDSNVK…YMRRMKEMAN (219 aa)) is b. Positions 546–681 (IQAGMSFYGE…NFVKRSIELI (136 aa)) are c.

It belongs to the heat shock protein 90 family. As to quaternary structure, homodimer.

It is found in the cytoplasm. In terms of biological role, molecular chaperone. Has ATPase activity. The protein is Chaperone protein htpG of Bacteroides fragilis (strain YCH46).